Reading from the N-terminus, the 158-residue chain is UPF0260 protein RL1394 (158 aa).

The protein belongs to the UPF0260 family.

This chain is UPF0260 protein RL1394, found in Rhizobium johnstonii (strain DSM 114642 / LMG 32736 / 3841) (Rhizobium leguminosarum bv. viciae).